A 154-amino-acid polypeptide reads, in one-letter code: Protein X (154 aa).

Residues 68–117 are mitochondrial targeting sequence; the sequence is PCALRFTSARRMETTVNAHQILPKVLHKRTLGLSAMSTTDLEAYFKDCLF.

Belongs to the orthohepadnavirus protein X family. In terms of assembly, may form homodimer. May interact with host CEBPA, CFLAR, CREB1, DDB1, E4F1, HBXIP, HSPD1/HSP60, NFKBIA, POLR2E and SMAD4. Interacts with host SMC5-SMC6 complex and induces its degradation. Interacts with host TRPC4AP; leading to prevent ubiquitination of TRPC4AP. Interacts with host PLSCR1; this interaction promotes ubiquitination and degradation of HBx and impairs HBx-mediated cell proliferation. Post-translationally, a fraction may be phosphorylated in insect cells and HepG2 cells, a human hepatoblastoma cell line. Phosphorylated in vitro by host protein kinase C or mitogen-activated protein kinase. N-acetylated in insect cells.

It localises to the host cytoplasm. The protein resides in the host nucleus. It is found in the host mitochondrion. In terms of biological role, multifunctional protein that plays a role in silencing host antiviral defenses and promoting viral transcription. Does not seem to be essential for HBV infection. May be directly involved in development of cirrhosis and liver cancer (hepatocellular carcinoma). Most of cytosolic activities involve modulation of cytosolic calcium. The effect on apoptosis is controversial depending on the cell types in which the studies have been conducted. May induce apoptosis by localizing in mitochondria and causing loss of mitochondrial membrane potential. May also modulate apoptosis by binding host CFLAR, a key regulator of the death-inducing signaling complex (DISC). Promotes viral transcription by using the host E3 ubiquitin ligase DDB1 to target the SMC5-SMC6 complex to proteasomal degradation. This host complex would otherwise bind to viral episomal DNA, and prevents its transcription. Moderately stimulates transcription of many different viral and cellular transcription elements. Promoters and enhancers stimulated by HBx contain DNA binding sites for NF-kappa-B, AP-1, AP-2, c-EBP, ATF/CREB, or the calcium-activated factor NF-AT. This is Protein X from Hepatitis B virus genotype E subtype ayw4 (isolate Kou) (HBV-E).